We begin with the raw amino-acid sequence, 233 residues long: Large ribosomal subunit protein bL19c (233 aa).

The transit peptide at 1 to 77 (MASKVLPQAL…FPARNSFVVR (77 aa)) directs the protein to the chloroplast.

In terms of assembly, component of the chloroplast large ribosomal subunit (LSU). Mature 70S chloroplast ribosomes of higher plants consist of a small (30S) and a large (50S) subunit. The 30S small subunit contains 1 molecule of ribosomal RNA (16S rRNA) and 24 different proteins. The 50S large subunit contains 3 rRNA molecules (23S, 5S and 4.5S rRNA) and 33 different proteins.

It localises to the plastid. Its subcellular location is the chloroplast. Functionally, component of the chloroplast ribosome (chloro-ribosome), a dedicated translation machinery responsible for the synthesis of chloroplast genome-encoded proteins, including proteins of the transcription and translation machinery and components of the photosynthetic apparatus. The protein is Large ribosomal subunit protein bL19c (RPL19) of Spinacia oleracea (Spinach).